Here is a 723-residue protein sequence, read N- to C-terminus: Catalase-peroxidase (723 aa).

The segment at residues 98 to 226 is a cross-link (tryptophyl-tyrosyl-methioninium (Trp-Tyr) (with M-252)); it reads WHSAGSYRVG…LAAVMMGLIY (129 aa). The active-site Proton acceptor is H99. The tryptophyl-tyrosyl-methioninium (Tyr-Met) (with W-98) cross-link spans 226 to 252; the sequence is YVNPEGVDGNPDPLKTAKDMRVTFARM. H267 is a binding site for heme b.

The protein belongs to the peroxidase family. Peroxidase/catalase subfamily. Homodimer or homotetramer. Requires heme b as cofactor. Formation of the three residue Trp-Tyr-Met cross-link is important for the catalase, but not the peroxidase activity of the enzyme.

The enzyme catalyses H2O2 + AH2 = A + 2 H2O. It carries out the reaction 2 H2O2 = O2 + 2 H2O. Functionally, bifunctional enzyme with both catalase and broad-spectrum peroxidase activity. This is Catalase-peroxidase from Vibrio vulnificus (strain CMCP6).